We begin with the raw amino-acid sequence, 452 residues long: Friend leukemia integration 1 transcription factor (452 aa).

Ser39 bears the Phosphoserine mark. The region spanning 112 to 198 (PPPPNMTTNE…SHLTYLRESS (87 aa)) is the PNT domain. Polar residues predominate over residues 202-214 (YNTTSHTDPSSRL). Residues 202–272 (YNTTSHTDPS…YQILGPTSSR (71 aa)) are disordered. Residues 215–226 (NVKEDPSYDSVR) are compositionally biased toward basic and acidic residues. Positions 248–257 (QTMSKNTEQR) are enriched in polar residues. A DNA-binding region (ETS) is located at residues 281–361 (IQLWQFLLEL…HGKRYAYKFD (81 aa)).

It belongs to the ETS family. Can form homodimers or heterodimers with ETV6/TEL1.

It is found in the nucleus. Its function is as follows. Sequence-specific transcriptional activator. Recognizes the DNA sequence 5'-C[CA]GGAAGT-3'. In Bos taurus (Bovine), this protein is Friend leukemia integration 1 transcription factor (FLI1).